The sequence spans 201 residues: uncharacterized protein (201 aa).

It belongs to the mimivirus L885/R898 family.

This is an uncharacterized protein from Acanthamoeba polyphaga (Amoeba).